The primary structure comprises 127 residues: Large ribosomal subunit protein bL17 (127 aa).

It belongs to the bacterial ribosomal protein bL17 family. Part of the 50S ribosomal subunit. Contacts protein L32.

This Salmonella paratyphi A (strain AKU_12601) protein is Large ribosomal subunit protein bL17.